We begin with the raw amino-acid sequence, 100 residues long: UPF0213 protein YhbQ (100 aa).

Residues 2–77 (TPWFLYLIRT…KQLTKRQKER (76 aa)) enclose the GIY-YIG domain.

This sequence belongs to the UPF0213 family.

The protein is UPF0213 protein YhbQ of Shigella dysenteriae serotype 1 (strain Sd197).